A 38-amino-acid chain; its full sequence is Allatostatin-C (38 aa).

A propeptide spanning residues 1–19 is cleaved from the precursor; the sequence is MRRALDGPGSSSLDTRQAD. Gln-22 is subject to Pyrrolidone carboxylic acid; partial.

The protein belongs to the allatostatin family. In its non-pyroglutamate form, expressed in antennal lobe (AL), corpora cardiaca (CC), corpora allata (CA) and gnathal ganglion (GNG) with expression in AL detected in most animals and expression in CC, CA and GNG detected in few animals (at protein level). In its pyroglutamate form, expressed in antennal lobe (AL), corpora cardiaca (CC) and corpora allata (CA) with expression detected in few animals (at protein level). Not expressed in GNG (protein level).

The protein localises to the secreted. In terms of biological role, strongly inhibits juvenile hormone biosynthesis. This chain is Allatostatin-C, found in Agrotis ipsilon (Black cutworm moth).